Here is a 313-residue protein sequence, read N- to C-terminus: Protein FixB (313 aa).

255–283 (LYLAVGISGQIQHMVGANASQTIFAINKD) contacts FAD.

This sequence belongs to the ETF alpha-subunit/FixB family. In terms of assembly, heterodimer of FixA and FixB.

Its pathway is amine and polyamine metabolism; carnitine metabolism. Its function is as follows. Required for anaerobic carnitine reduction. May bring reductant to CaiA. This is Protein FixB from Escherichia coli (strain SMS-3-5 / SECEC).